The primary structure comprises 172 residues: Lipoprotein signal peptidase (172 aa).

2 helical membrane-spanning segments follow: residues 70–90 and 94–114; these read ERWL…AWIW and AKGD…NIAD. Active-site residues include Asp-123 and Asp-142. The chain crosses the membrane as a helical span at residues 134–154; sequence PFLVFNVADAAITIGVLILVL.

This sequence belongs to the peptidase A8 family.

Its subcellular location is the cell inner membrane. The enzyme catalyses Release of signal peptides from bacterial membrane prolipoproteins. Hydrolyzes -Xaa-Yaa-Zaa-|-(S,diacylglyceryl)Cys-, in which Xaa is hydrophobic (preferably Leu), and Yaa (Ala or Ser) and Zaa (Gly or Ala) have small, neutral side chains.. It functions in the pathway protein modification; lipoprotein biosynthesis (signal peptide cleavage). Its function is as follows. This protein specifically catalyzes the removal of signal peptides from prolipoproteins. This is Lipoprotein signal peptidase from Rhizorhabdus wittichii (strain DSM 6014 / CCUG 31198 / JCM 15750 / NBRC 105917 / EY 4224 / RW1) (Sphingomonas wittichii).